Here is a 733-residue protein sequence, read N- to C-terminus: Leucine-rich repeat neuronal protein 4 (733 aa).

The first 19 residues, 1 to 19 (MRWTLMLQLLQLLLQLLMA), serve as a signal peptide directing secretion. Residues 20 to 676 (QSQSLERISQ…CATFTTKPSS (657 aa)) are Extracellular-facing. LRR repeat units lie at residues 62–82 (GVTTLNLANRSLESLPSCLPR), 83–106 (TLRSLDGSHNLLRALSEPVLGRLP), 107–128 (ELRVLTLHHNRISVLHWGRDTL), 130–151 (ELRELDLSHNLLTELPPCAGPS), 154–175 (SLRSLALAGNPLRALLPRTFAC), 178–199 (ALRLLNLSCSELGHIAQEAFAG), 207–230 (ALELLDLSGTSLERVESGWIRNLP), 231–253 (KLKSLFLRKMPRLKTLEGDIFKM), 256–278 (NLRQLDCGDSPALTSVHTEIFQD), and 281–302 (NLQVLQFQNCNLSSFGPWNSSQ). A glycan (N-linked (GlcNAc...) asparagine) is linked at Asn-70. An N-linked (GlcNAc...) asparagine glycan is attached at Asn-183. N-linked (GlcNAc...) asparagine glycosylation is found at Asn-291, Asn-299, Asn-327, Asn-408, and Asn-469. Residues 311–364 (NPLICSCELAWLLVDVNKTVLHRAADTMCEPALGSTGPFSGPLSLSHLSNVCRS) form the LRRCT domain. The interval 395–423 (STALSAQPGGSQQNITKVPSLTMTSPTQG) is disordered. The tract at residues 480 to 518 (KYLEPLPTSPNPRSLPQTKQRTQATPRALHTDPPQDEIP) is disordered. Positions 490–504 (NPRSLPQTKQRTQAT) are enriched in polar residues. In terms of domain architecture, Fibronectin type-III spans 576-675 (TPDPPTLQGV…SCATFTTKPS (100 aa)). Asn-619 carries N-linked (GlcNAc...) asparagine glycosylation. Residues 677 to 697 (VVIFWGLCTASGLLLVSTLVL) traverse the membrane as a helical segment. The Cytoplasmic portion of the chain corresponds to 698 to 733 (SVCLWRQRWKPHRQFYDTHLVAFKNPARAEEVTQWE).

Its subcellular location is the membrane. Its function is as follows. May play an important role in hippocampus-dependent long-lasting memory. This Mus musculus (Mouse) protein is Leucine-rich repeat neuronal protein 4 (Lrrn4).